A 425-amino-acid polypeptide reads, in one-letter code: Histidine--tRNA ligase 1 (425 aa).

Belongs to the class-II aminoacyl-tRNA synthetase family. In terms of assembly, homodimer.

The protein resides in the cytoplasm. The catalysed reaction is tRNA(His) + L-histidine + ATP = L-histidyl-tRNA(His) + AMP + diphosphate + H(+). The sequence is that of Histidine--tRNA ligase 1 from Bacillus cereus (strain ZK / E33L).